The sequence spans 470 residues: MTPFMTEDFLLDTEFARRLYHDYAKDQPIFDYHCHLPPQQIAEDYRFKNLYDIWLKGDHYKWRAMRTNGVAERLCTGDASDREKFDAWAATVPHTIGNPLYHWTHLELRRPFGITGKLLSPSTADEIWNECNELLAQDNFSARGIMQQMNVKMVGTTDDPIDSLEHHAEIAKDGSFTIKVLPSWRPDKAFNIEQATFNDYMAKLGEVSDTDIRRFADLQTALTKRLDHFAAHGCKVSDHALDVVMFAEANEAELDSILARRLAGETLSEHEVAQFKTAVLVFLGAEYARRGWVQQYHIGALRNNNLRQFKLLGPDVGFDSINDRPMAEELSKLLSKQNEENLLPKTILYCLNPRDNEVLGTMIGNFQGEGMPGKMQFGSGWWFNDQKDGMERQMTQLAQLGLLSRFVGMLTDSRSFLSYTRHEYFRRILCQMIGRWVEAGEAPADINLLGEMVKNICFNNARDYFAIELN.

Belongs to the metallo-dependent hydrolases superfamily. Uronate isomerase family.

The enzyme catalyses D-glucuronate = D-fructuronate. It catalyses the reaction aldehydo-D-galacturonate = keto-D-tagaturonate. It functions in the pathway carbohydrate metabolism; pentose and glucuronate interconversion. The sequence is that of Uronate isomerase from Shigella boydii serotype 4 (strain Sb227).